The chain runs to 240 residues: Eukaryotic translation initiation factor 3 subunit J (240 aa).

Residues 1–66 (MADDWESAAD…VPVKTKPSKA (66 aa)) form a disordered region. Residues 27–45 (GEDDDDDVKESWEDEEEKK) show a composition bias toward acidic residues.

The protein belongs to the eIF-3 subunit J family. As to quaternary structure, component of the eukaryotic translation initiation factor 3 (eIF-3) complex. The eIF-3 complex interacts with pix.

It is found in the cytoplasm. Functionally, component of the eukaryotic translation initiation factor 3 (eIF-3) complex, which is involved in protein synthesis of a specialized repertoire of mRNAs and, together with other initiation factors, stimulates binding of mRNA and methionyl-tRNAi to the 40S ribosome. The eIF-3 complex specifically targets and initiates translation of a subset of mRNAs involved in cell proliferation. This is Eukaryotic translation initiation factor 3 subunit J from Drosophila persimilis (Fruit fly).